The following is a 228-amino-acid chain: Large ribosomal subunit protein uL4 (228 aa).

2 disordered regions span residues 45 to 102 and 208 to 228; these read GRQG…SQRT and PAKGKTAKAAATSGEAEEANQ. The span at 208–221 shows a compositional bias: low complexity; the sequence is PAKGKTAKAAATSG.

This sequence belongs to the universal ribosomal protein uL4 family. In terms of assembly, part of the 50S ribosomal subunit.

One of the primary rRNA binding proteins, this protein initially binds near the 5'-end of the 23S rRNA. It is important during the early stages of 50S assembly. It makes multiple contacts with different domains of the 23S rRNA in the assembled 50S subunit and ribosome. Functionally, forms part of the polypeptide exit tunnel. In Saccharopolyspora erythraea (strain ATCC 11635 / DSM 40517 / JCM 4748 / NBRC 13426 / NCIMB 8594 / NRRL 2338), this protein is Large ribosomal subunit protein uL4.